The sequence spans 155 residues: MSSNSKLLIDIQTASPAIEAALKKIASSALIKKWIKAATPLSGLLTLRFVNSTEGKKLNAAFRKKHYATNVLTFPYEHSKSALSADIIFCLPVIRKEAKEQGKTVKAHLAHLIVHGCLHAQGFDHEHEKETKKMEKLEVALLKKLGFTDPYLTTQ.

3 residues coordinate Zn(2+): His115, His119, and His125.

This sequence belongs to the endoribonuclease YbeY family. Zn(2+) is required as a cofactor.

The protein localises to the cytoplasm. Functionally, single strand-specific metallo-endoribonuclease involved in late-stage 70S ribosome quality control and in maturation of the 3' terminus of the 16S rRNA. This Polynucleobacter asymbioticus (strain DSM 18221 / CIP 109841 / QLW-P1DMWA-1) (Polynucleobacter necessarius subsp. asymbioticus) protein is Endoribonuclease YbeY.